Consider the following 124-residue polypeptide: Membrane-anchored ubiquitin-fold protein 2 (124 aa).

Residues 8 to 74 (LEIKFRLNDG…LENNKTVGDC (67 aa)) form the Ubiquitin-like domain. Residues C115, C117, C119, and C124 are each lipidated (S-palmitoyl cysteine).

Post-translationally, acylated protein. Probably modified with palmitate. Ubiquitous, but three fold higher expression in stamens.

It is found in the cell membrane. In terms of biological role, may serve as docking site to facilitate the association of other proteins to the plasma membrane. This chain is Membrane-anchored ubiquitin-fold protein 2 (MUB2), found in Arabidopsis thaliana (Mouse-ear cress).